The sequence spans 250 residues: NADH-quinone oxidoreductase subunit C (250 aa).

It belongs to the complex I 30 kDa subunit family. As to quaternary structure, NDH-1 is composed of 14 different subunits. Subunits NuoB, C, D, E, F, and G constitute the peripheral sector of the complex.

The protein resides in the cell inner membrane. It catalyses the reaction a quinone + NADH + 5 H(+)(in) = a quinol + NAD(+) + 4 H(+)(out). NDH-1 shuttles electrons from NADH, via FMN and iron-sulfur (Fe-S) centers, to quinones in the respiratory chain. The immediate electron acceptor for the enzyme in this species is believed to be ubiquinone. Couples the redox reaction to proton translocation (for every two electrons transferred, four hydrogen ions are translocated across the cytoplasmic membrane), and thus conserves the redox energy in a proton gradient. This is NADH-quinone oxidoreductase subunit C from Xylella fastidiosa (strain M23).